An 877-amino-acid chain; its full sequence is ATP-dependent RNA helicase dbp7 (877 aa).

2 disordered regions span residues 34 to 163 (AKKT…LPPG) and 225 to 251 (FNPT…APLT). Residues 50 to 73 (STREIFSERQHDTGAEEYIGREPS) show a composition bias toward basic and acidic residues. Positions 255–284 (ATFTNLGLSRRLAAHLSTKLDMKAPTAIQK) match the Q motif motif. Residues 288–484 (TQLISDDSDA…EISLKDAVHI (197 aa)) form the Helicase ATP-binding domain. Position 301–308 (301–308 (AETGSGKT)) interacts with ATP. The DEAD box signature appears at 417 to 420 (DEGD). Residues 512-719 (QLKQSYAIVP…LTHHTAEDLI (208 aa)) form the Helicase C-terminal domain. Residues 803–851 (PGLRPAKMTKADRSVAARKAKRGEKEEEKAPEGERVRKQRKMELDLPTV) form a disordered region. Positions 825-846 (GEKEEEKAPEGERVRKQRKMEL) are enriched in basic and acidic residues.

This sequence belongs to the DEAD box helicase family. DDX31/DBP7 subfamily.

The protein localises to the nucleus. Its subcellular location is the nucleolus. The catalysed reaction is ATP + H2O = ADP + phosphate + H(+). ATP-binding RNA helicase involved in the biogenesis of 60S ribosomal subunits and is required for the normal formation of 25S and 5.8S rRNAs. This Sclerotinia sclerotiorum (strain ATCC 18683 / 1980 / Ss-1) (White mold) protein is ATP-dependent RNA helicase dbp7 (dbp7).